The following is a 531-amino-acid chain: Acyl-CoA ligase azaF (531 aa).

Residue 188–199 (RLFSSGTTGLPK) coordinates AMP. Positions 449 to 525 (EVEGVLRNHP…DAIPRNASGK (77 aa)) are AMP-binding.

It belongs to the ATP-dependent AMP-binding enzyme family.

The protein operates within secondary metabolite biosynthesis. Its function is as follows. Acyl-CoA ligase; part of the gene cluster that mediates the biosynthesis of azaphilones, a class of fungal metabolites characterized by a highly oxygenated pyrano-quinone bicyclic core and exhibiting a broad range of bioactivities. In the first step, the non-reducing polyketide synthase azaA forms the hexaketide precursor from successive condensations of five malonyl-CoA units, presumably with a simple acetyl-CoA starter unit. The reactive polyketide chain then undergoes a PT-mediated C2-C7 cyclization to afford the aromatic ring and is eventually released as an aldehyde through the R-domain. The putative ketoreductase azaE is proposed to catalyze the reduction of the terminal ketone resulting in the early culture product FK17-P2a. The monooxygenase azaH was demonstrated to be the only enzyme required to convert FK17-P2a to azanigerone E. AzaH first hydroxylates the benzaldehyde intermediate FK17-P2a at C4, which triggers the formation of the pyran-ring to afford azanigerone E. In parallel, the 2,4-dimethylhexanoyl chain is synthesized by the HR-PKS azaB and is proposed to be transferred to the C4-hydroxyl of azanigerone E by the acyltransferase azaD directly from the ACP domain of azaB. Alternatively, the 2,4-dimethyl-hexanoyl chain may be offloaded from the HR-PKS as a carboxylic acid and converted to an acyl-CoA by azaF. The resulting acyl-CoA molecule could then be taken up as a substrate by AzaD to form azanigerone B. To yield the carboxylic acid substituent in azanigerone A, the hydroxypropyl side chain of azanigerone B would need to undergo a C-C oxidative cleavage catalyzed by cytochrome P450 AzaI. AzaI is proposed to act on a vicinal diol that leads to a C-C bond scission either through an alkoxyradical intermediate or a peroxy complex. In the biosynthesis of azanigerone A, azanigerone B first undergoes hydroxylation at C10, possibly catalyzed by one of the two FAD-dependent monooxygenases encoded in the cluster, azaG or azaL, resulting in the vicinal diol azanigerone C. Oxidative cleavage of azanigerone C by azaI would yield the corresponding aldehyde derivative of azanigerone A. Finally, the dehydrogenase azaJ is proposed to convert the aldehyde functional group into the carboxylic acid, completing the conversion from azanigerone B to azanigerone A. Alternatively, the oxidation of aldehyde to carboxylic acid may be catalyzed by the same P450 enzyme azaI via consecutive oxidation or by endogenous alcohol dehydrogenase. The protein is Acyl-CoA ligase azaF of Aspergillus niger (strain ATCC 1015 / CBS 113.46 / FGSC A1144 / LSHB Ac4 / NCTC 3858a / NRRL 328 / USDA 3528.7).